The primary structure comprises 93 residues: Phosphoribosyl-ATP pyrophosphatase (93 aa).

Belongs to the PRA-PH family.

The protein localises to the cytoplasm. The enzyme catalyses 1-(5-phospho-beta-D-ribosyl)-ATP + H2O = 1-(5-phospho-beta-D-ribosyl)-5'-AMP + diphosphate + H(+). It participates in amino-acid biosynthesis; L-histidine biosynthesis; L-histidine from 5-phospho-alpha-D-ribose 1-diphosphate: step 2/9. The polypeptide is Phosphoribosyl-ATP pyrophosphatase (Mycobacterium leprae (strain Br4923)).